The chain runs to 513 residues: Fumarate reductase (513 aa).

41 to 55 serves as a coordination point for FAD; that stretch reads AIVIGGGLAGLSATN. Ser100 carries the post-translational modification Phosphoserine. Catalysis depends on residues His288 and Arg311.

Belongs to the FAD-dependent oxidoreductase 2 family. FRD/SDH subfamily. The cofactor is FAD.

Its subcellular location is the cytoplasm. The protein resides in the mitochondrion. It localises to the nucleus. The enzyme catalyses succinate + NAD(+) = fumarate + NADH + H(+). Its function is as follows. Irreversibly catalyzes the reduction of fumarate to succinate. In Schizosaccharomyces pombe (strain 972 / ATCC 24843) (Fission yeast), this protein is Fumarate reductase (osm1).